We begin with the raw amino-acid sequence, 1035 residues long: MSGSYPFIDIAALDSVREGFARGDAQLVLAHDLSTVLWVNGPGAKLFGYNRVEDLIEGQLDLPVATRRQIAAFSSENTSAPSAVAVRLGGGLRSELTHLHVSNIKLPDGVAALLVATQMPDNSAEAAISGLGDDSTHIALVDTVGKVVAASPRFALLDISASTLEDLIVEAGDATDRIVKRRIRTGSHSVPGAIARLTDTPALHLLCIVGDAPAQFQTAAEAVPLPDNAEAVLEEILPEQGDAPAQQAQKTHAEQPRPKTFAFDHDAPPARFIWKVGPDGTFSEISPDLAAVVGPNSADIVGRRFSDVANVFGFYTDGSIAALLLERDTWSGKRLLWPVEGTRLRVPVELAALPVYSRDREFLGFRGFGIVRPAEAEADPEEIGLALAGGIPQNRKPRKEPAETARMVGEDDVLALSEEVANDDQPAAVLPKPPLDITPTPGRRDSDKVISLLNSCAQEKVAADQAKFLKEKERATRPEGGLTKTERNAFREIAERLRKQGLANTRAESETPVSETSSIEPVEPTPPVKTRSEPIQPDETALLANLPVPVIIHSGDAIHYVNQALLDITGYESLDDIRSAGGVDVLFNSESDDGETRQSMVLRHADGSEEPVDTHLNAIAWRGGRALMLSLMPVTAADLPAPAELPAANDEEKQALEAHVEELKTILDTATDGVVLIDPEGRIRSMNHSASALFGYERDEAEGKFFSMLFAIESQRAAMDYLHGLSGNGVLSVLNDGREVIGREAKGGFIPLFMTIGKLPHTRGFCAVLRDITQWKRTEEELTNARKEAERASNQKTEFLARISHEIRTPLNAIIGFSELMADEKFGPIGNDRYRDYLRDINRSGNHVLALVNDLLDISKIEAGALDMQFEAVSLNDAIGEAIALMQPQANRERVIIRSSFQSNLPDIVADSRSIKQVALNLLSNAVRFTAPGGQVIVSTSYELNGDVVMRVRDTGIGMSKSEVEQALKPFRQINALEGRKAESAKDWRNEGTGLGLPLTKAMVEANRAQFAIDSNPGQGTVVEIVFPPTRVLAD.

The segment at 1–613 (MSGSYPFIDI…HADGSEEPVD (613 aa)) is important for polar localization. A disordered region spans residues 500–533 (QGLANTRAESETPVSETSSIEPVEPTPPVKTRSE). The segment at 614–1035 (THLNAIAWRG…VFPPTRVLAD (422 aa)) is interaction with DivK. A PAS domain is found at 659 to 730 (HVEELKTILD…YLHGLSGNGV (72 aa)). The Histidine kinase domain occupies 802 to 1031 (RISHEIRTPL…VVEIVFPPTR (230 aa)). At His-805 the chain carries Phosphohistidine; by autocatalysis.

Interacts with DivK.

The protein resides in the cytoplasm. The enzyme catalyses ATP + protein L-histidine = ADP + protein N-phospho-L-histidine.. Functionally, functions as a polar differentiation marker. Essential protein that, by localizing in the old pole of dividing cells, controls cell division and maturation, probably through control of DivK phosphorylation status and cellular distribution, which in turn regulates CtrA, a transcriptional regulator of the minB operon. The asymmetrical localization of this protein is probably required for cells to enter a new division cycle. The polypeptide is Cell-division control histidine kinase PdhS (pdhS) (Brucella suis (strain ATCC 23445 / NCTC 10510)).